Here is a 627-residue protein sequence, read N- to C-terminus: MALVSVAPMASRSCLHKSLSSSAHELKTICRTIPTLGMSRRGKSATPSMSMSLTTTVSDDGVQRRMGDFHSNLWNDDFIQSLSTSYGEPSYRERAERLIGEVKKMFNSMSSEDGELISPHNDLIQRVWMVDSVERLGIERHFKNEIKSALDYVYSYWSEKGIGCGRESVVADLNSTALGFRTLRLHGYAVSADVLNLFKDQNGQFACSPSQTEEEIRSVLNLYRASLIAFPGEKVMEEAEIFSAKYLEESLQKISVSSLSQEIRDVLEYGWHTYLPRMEARNHIDVFGQDTQNSKSCINTEKLLELAKLEFNIFHSLQKRELEYLVRWWKDSGSPQMTFCRHRHVEYYTLASCIAFEPQHSGFRLGFAKACHIITILDDMYDTFGTVDELELFTAAMKRWDPSAADCLPEYMKGVYLILYDTVNETSREAEKAQGRDTLDYARRAWDDYLDSYMQEAKWIATGYLPTFAEYYENGKVSSGHRTSALQPILTMDIPFPPHILKEVDFPSKLNDLASAILRLRGDTRCYKADRARGEEASSISCYMKDNPGATEEDALDHINAMISDVIRGLNWELLNPNSSVPISSKKHVFDISRAFHYGYKYRDGYSVANIETKSLVRRTVIDPVTL.

Residues 1–36 constitute a chloroplast transit peptide; it reads MALVSVAPMASRSCLHKSLSSSAHELKTICRTIPTL. Mg(2+) contacts are provided by Asp-378, Asp-382, and Asp-530. The DDXXD motif signature appears at 378–382; the sequence is DDMYD.

The protein belongs to the terpene synthase family. Tpsd subfamily. The cofactor is Mg(2+). It depends on Mn(2+) as a cofactor.

The protein resides in the plastid. It localises to the chloroplast. The catalysed reaction is (2E)-geranyl diphosphate = (1S,5S)-alpha-pinene + diphosphate. It catalyses the reaction (2E)-geranyl diphosphate = (1S,5S)-beta-pinene + diphosphate. The protein operates within terpene metabolism; oleoresin biosynthesis. Functionally, involved in defensive oleoresin formation in conifers in response to insect attack or other injury. Involved in monoterpene (C10) olefins biosynthesis. A mixture of alpha- and beta-pinene (35:10) is produced by this enzyme. This Picea sitchensis (Sitka spruce) protein is (-)-alpha-pinene synthase 2, chloroplastic.